The sequence spans 81 residues: uncharacterized protein (81 aa).

The first 24 residues, 1-24 (MRKILKIVSLLILLLLLVYSFFSP), serve as a signal peptide directing secretion. The Extracellular portion of the chain corresponds to 25–28 (NSQL). The chain crosses the membrane as a helical span at residues 29–49 (FVFVQLIIIAFLIGFGINCFV). At 50–81 (KKERYQGTLYFVIAICNITINLDKINELIQSI) the chain is on the cytoplasmic side.

It is found in the cell membrane. This is an uncharacterized protein from Bacillus subtilis (strain 168).